Reading from the N-terminus, the 356-residue chain is NADH dehydrogenase (ubiquinone) complex I, assembly factor 6 homolog (356 aa).

The transit peptide at 1–41 (MIRNSGRILFNSLKNSNVKLINRNVIINSNIRLFSTSTNNT) directs the protein to the mitochondrion.

The protein belongs to the NDUFAF6 family.

The protein resides in the mitochondrion inner membrane. Functionally, involved in the assembly of mitochondrial NADH:ubiquinone oxidoreductase complex (complex I) at early stages. This chain is NADH dehydrogenase (ubiquinone) complex I, assembly factor 6 homolog, found in Dictyostelium discoideum (Social amoeba).